Reading from the N-terminus, the 335-residue chain is Glucokinase (335 aa).

Residue 11 to 16 (ADIGGT) participates in ATP binding.

It belongs to the bacterial glucokinase family.

It localises to the cytoplasm. The catalysed reaction is D-glucose + ATP = D-glucose 6-phosphate + ADP + H(+). This Xanthomonas oryzae pv. oryzae (strain MAFF 311018) protein is Glucokinase.